A 1027-amino-acid chain; its full sequence is Circadian locomoter output cycles protein kaput (1027 aa).

One can recognise a bHLH domain in the interval 15 to 65 (LCRKSRNLSEKKRRDQFNSLVNDLSALISTSSRKMDKSTVLKSTIAFLKNH). 2 PAS domains span residues 88 to 160 (NDEY…VIEP) and 255 to 321 (REMS…ELRQ). Disordered regions lie at residues 377 to 402 (RKEG…ASTG), 443 to 575 (TSPA…QQLQ), 765 to 800 (QQMM…TQQQ), 869 to 911 (TINP…NNED), and 926 to 1027 (SINF…GSSQ). A compositionally biased stretch (low complexity) spans 383–402 (SGNSNSITNNGSSKVIASTG). Residues 443–486 (TSPAVDSSPMWSASAVQPSGSCQINPLKTSRPASSYGNISSTGI) are compositionally biased toward polar residues. Low complexity-rich tracts occupy residues 504–516 (SDST…SVTS) and 552–575 (QQQQ…QQLQ). Residues 780–1027 (QHNLQQQHQS…SPHTAPGSSQ (248 aa)) form an implicated in the circadian rhythmicity region. Composition is skewed to low complexity over residues 871–909 (NPFN…QNNN) and 951–995 (SGSN…NQNQ). Positions 1006 to 1027 (QMSQEQSQNLFNSPHTAPGSSQ) are enriched in polar residues.

Efficient DNA binding requires dimerization with another bHLH protein. Forms a heterodimer with Cycle. Widely expressed. Found in head, body, and appendage fractions.

The protein localises to the nucleus. Circadian regulator that acts as a transcription factor and generates a rhythmic output with a period of about 24 hours. Oscillates in antiphase to the cycling observed for period (PER) and timeless (TIM). According to PubMed:9742131, reaches peak abundance within several hours of the dark-light transition at ZT0 (zeitgeber 0), whereas PubMed:9616122 describes bimodal oscillating expression with maximum at ZT5 and ZT23. Clock-cycle heterodimers activate cycling transcription of PER and TIM by binding to the E-box (5'-CACGTG-3') present in their promoters. Once induced, Period and Timeless block Clock's ability to transactivate their promoters. The protein is Circadian locomoter output cycles protein kaput (Clk) of Drosophila melanogaster (Fruit fly).